A 412-amino-acid polypeptide reads, in one-letter code: tRNA N6-adenosine threonylcarbamoyltransferase, mitochondrial (412 aa).

A mitochondrion-targeting transit peptide spans 1-78 (MLCLVYNSIL…IICLNTHRTI (78 aa)). Residues His157 and His161 each coordinate a divalent metal cation. Residues 179–183 (LVSGG), Asp212, Ala228, Glu232, 328–329 (RN), and Ser363 each bind substrate. Asp364 lines the a divalent metal cation pocket.

This sequence belongs to the KAE1 / TsaD family. Homodimer. It depends on a divalent metal cation as a cofactor.

It localises to the mitochondrion. It catalyses the reaction L-threonylcarbamoyladenylate + adenosine(37) in tRNA = N(6)-L-threonylcarbamoyladenosine(37) in tRNA + AMP + H(+). In terms of biological role, required for the formation of a threonylcarbamoyl group on adenosine at position 37 (t(6)A37) in mitochondrial tRNAs that read codons beginning with adenine. Probably involved in the transfer of the threonylcarbamoyl moiety of threonylcarbamoyl-AMP (TC-AMP) to the N6 group of A37. Involved in mitochondrial genome maintenance. This chain is tRNA N6-adenosine threonylcarbamoyltransferase, mitochondrial (pgp1), found in Schizosaccharomyces pombe (strain 972 / ATCC 24843) (Fission yeast).